Consider the following 245-residue polypeptide: 1-(5-phosphoribosyl)-5-[(5-phosphoribosylamino)methylideneamino] imidazole-4-carboxamide isomerase (245 aa).

D8 (proton acceptor) is an active-site residue. The active-site Proton donor is D129.

It belongs to the HisA/HisF family.

The protein resides in the cytoplasm. The catalysed reaction is 1-(5-phospho-beta-D-ribosyl)-5-[(5-phospho-beta-D-ribosylamino)methylideneamino]imidazole-4-carboxamide = 5-[(5-phospho-1-deoxy-D-ribulos-1-ylimino)methylamino]-1-(5-phospho-beta-D-ribosyl)imidazole-4-carboxamide. It functions in the pathway amino-acid biosynthesis; L-histidine biosynthesis; L-histidine from 5-phospho-alpha-D-ribose 1-diphosphate: step 4/9. The protein is 1-(5-phosphoribosyl)-5-[(5-phosphoribosylamino)methylideneamino] imidazole-4-carboxamide isomerase of Pelobacter propionicus (strain DSM 2379 / NBRC 103807 / OttBd1).